Reading from the N-terminus, the 25-residue chain is Panurgine R (25 aa).

2 disulfide bridges follow: Cys8-Cys23 and Cys11-Cys19.

It is found in the target cell membrane. The protein resides in the secreted. Its function is as follows. Antimicrobial peptide active against Gram-positive bacteria M.luteus (MIC=0.8 uM) and B.subtilis (MIC=1.5 uM). Less active against Gram-negative bacteria E.coli (MIC=32.5 uM) and yeast C.albicans (MIC=18.7 uM). Not active against S.aureus and P.aeruginosa. Has no hemolytic activity against human erythrocytes. Probably acts by disrupting membranes of target cells. The chain is Panurgine R from Panurgus calcaratus (Solitary bee).